The chain runs to 1269 residues: Phospholipase D A (1269 aa).

The span at 55–64 (YTSVGSAPTT) shows a compositional bias: polar residues. Residues 55 to 121 (YTSVGSAPTT…NNNLQSPTQS (67 aa)) are disordered. Composition is skewed to low complexity over residues 65–87 (NNNSNSNSNSNSSNRSLNNSGSS) and 95–114 (NSNKKVNNNNNNNNNNNNNN). Residues 131 to 192 (SKALHDFEEK…ELKSLDELLH (62 aa)) adopt a coiled-coil conformation. A compositionally biased stretch (polar residues) spans 222–232 (NSVTNNTPSSA). 2 disordered regions span residues 222 to 269 (NSVT…SSST) and 300 to 320 (NSYPNSIIPQGTPLDNPDPNL). Over residues 233–269 (TPLTLSNNNNYTSSSLATSPTTNSSSSSSSSSSSSST) the composition is skewed to low complexity. 2 PLD phosphodiesterase domains span residues 435–462 (IYWSHHQKTLIIDQEIAFVGGVDFCFGR) and 704–731 (EQIYVHSKLMIVDDRTIIVGSANINDRS). Catalysis depends on residues His-440, Lys-442, Asp-447, His-709, Lys-711, and Asp-716. Residues 803–835 (NNNNNSNINNNINNNNNEINNNNNNNNNNNSNE) are a coiled coil. Low complexity-rich tracts occupy residues 810-850 (INNN…NSNS), 859-906 (NLPP…GTTN), and 934-943 (SSPQDSPQDS). 2 disordered regions span residues 810-966 (INNN…HQSP) and 983-1007 (SNEQLPPPPSSTTPPPPPPPLTTTD). A compositionally biased stretch (pro residues) spans 987–1003 (LPPPPSSTTPPPPPPPL). A coiled-coil region spans residues 1059–1096 (TTAQQQQQQQQQQQQQQQQQQQQQQQQQQQQQQQQQQQ). The interval 1116–1167 (IKKKRSSISPSTSSNKLLLSGNGSGDSIRVVTDSGSSPRGQPRSMSSLHDHA) is disordered. Positions 1122 to 1142 (SISPSTSSNKLLLSGNGSGDS) are enriched in low complexity. Over residues 1148–1162 (DSGSSPRGQPRSMSS) the composition is skewed to polar residues.

This sequence belongs to the phospholipase D family.

It catalyses the reaction a 1,2-diacyl-sn-glycero-3-phosphocholine + H2O = a 1,2-diacyl-sn-glycero-3-phosphate + choline + H(+). Its activity is regulated as follows. Inhibited by butan-1-ol. Plays a role in cell growth. Hydrolyzes membrane phospholipids, such as PtdCho free headgroup and PtdOH (phosphatidic acid; signaling molecule on its own). Involved in the inhibition of actin-based motility and endocytosis. Its inhibition causes complete collapse of F-actin organization. The protein is Phospholipase D A (pldA) of Dictyostelium discoideum (Social amoeba).